We begin with the raw amino-acid sequence, 341 residues long: NADH-quinone oxidoreductase subunit H (341 aa).

8 consecutive transmembrane segments (helical) span residues 6–26 (LIVS…LMAY), 76–96 (LVFL…AAVI), 118–138 (VAVL…ILGG), 157–177 (VISY…LSGS), 198–218 (LPNW…IAAV), 252–272 (FLAE…LFLG), 278–298 (FADG…FYVW), and 313–333 (GLAW…TGLV).

The protein belongs to the complex I subunit 1 family. NDH-1 is composed of 14 different subunits. Subunits NuoA, H, J, K, L, M, N constitute the membrane sector of the complex.

Its subcellular location is the cell membrane. It catalyses the reaction a quinone + NADH + 5 H(+)(in) = a quinol + NAD(+) + 4 H(+)(out). In terms of biological role, NDH-1 shuttles electrons from NADH, via FMN and iron-sulfur (Fe-S) centers, to quinones in the respiratory chain. The immediate electron acceptor for the enzyme in this species is believed to be ubiquinone. Couples the redox reaction to proton translocation (for every two electrons transferred, four hydrogen ions are translocated across the cytoplasmic membrane), and thus conserves the redox energy in a proton gradient. This subunit may bind ubiquinone. The polypeptide is NADH-quinone oxidoreductase subunit H (Thermomicrobium roseum (strain ATCC 27502 / DSM 5159 / P-2)).